Consider the following 284-residue polypeptide: D-tagatose-1,6-bisphosphate aldolase subunit GatY (284 aa).

Catalysis depends on Asp-82, which acts as the Proton donor. Residues His-83 and His-180 each contribute to the Zn(2+) site. Gly-181 contacts dihydroxyacetone phosphate. Residue His-208 coordinates Zn(2+). Residues 209-211 (GAS) and 230-233 (NVAT) each bind dihydroxyacetone phosphate.

This sequence belongs to the class II fructose-bisphosphate aldolase family. TagBP aldolase GatY subfamily. As to quaternary structure, forms a complex with GatZ. It depends on Zn(2+) as a cofactor.

The catalysed reaction is D-tagatofuranose 1,6-bisphosphate = D-glyceraldehyde 3-phosphate + dihydroxyacetone phosphate. The protein operates within carbohydrate metabolism; D-tagatose 6-phosphate degradation; D-glyceraldehyde 3-phosphate and glycerone phosphate from D-tagatose 6-phosphate: step 2/2. In terms of biological role, catalytic subunit of the tagatose-1,6-bisphosphate aldolase GatYZ, which catalyzes the reversible aldol condensation of dihydroxyacetone phosphate (DHAP or glycerone-phosphate) with glyceraldehyde 3-phosphate (G3P) to produce tagatose 1,6-bisphosphate (TBP). Requires GatZ subunit for full activity and stability. Is involved in the catabolism of galactitol. The chain is D-tagatose-1,6-bisphosphate aldolase subunit GatY from Escherichia coli O6:K15:H31 (strain 536 / UPEC).